The sequence spans 345 residues: UDP-3-O-acylglucosamine N-acyltransferase 3 (345 aa).

H236 acts as the Proton acceptor in catalysis.

Belongs to the transferase hexapeptide repeat family. LpxD subfamily. As to quaternary structure, homotrimer.

The enzyme catalyses a UDP-3-O-[(3R)-3-hydroxyacyl]-alpha-D-glucosamine + a (3R)-hydroxyacyl-[ACP] = a UDP-2-N,3-O-bis[(3R)-3-hydroxyacyl]-alpha-D-glucosamine + holo-[ACP] + H(+). It functions in the pathway bacterial outer membrane biogenesis; LPS lipid A biosynthesis. Its function is as follows. Catalyzes the N-acylation of UDP-3-O-acylglucosamine using 3-hydroxyacyl-ACP as the acyl donor. Is involved in the biosynthesis of lipid A, a phosphorylated glycolipid that anchors the lipopolysaccharide to the outer membrane of the cell. In Gloeobacter violaceus (strain ATCC 29082 / PCC 7421), this protein is UDP-3-O-acylglucosamine N-acyltransferase 3.